We begin with the raw amino-acid sequence, 431 residues long: Chaperone SurA (431 aa).

Positions 1 to 20 are cleaved as a signal peptide; the sequence is MKNWRTFILGLALCANGALA. PpiC domains are found at residues 171-272 and 282-382; these read GAEF…KVND and VTEV…QLID.

The protein localises to the periplasm. The catalysed reaction is [protein]-peptidylproline (omega=180) = [protein]-peptidylproline (omega=0). Chaperone involved in the correct folding and assembly of outer membrane proteins. Recognizes specific patterns of aromatic residues and the orientation of their side chains, which are found more frequently in integral outer membrane proteins. May act in both early periplasmic and late outer membrane-associated steps of protein maturation. The protein is Chaperone SurA of Sodalis glossinidius (strain morsitans).